Reading from the N-terminus, the 598-residue chain is Glutamine--fructose-6-phosphate aminotransferase [isomerizing] (598 aa).

Cys-2 (nucleophile; for GATase activity) is an active-site residue. In terms of domain architecture, Glutamine amidotransferase type-2 spans 2 to 219 (CGIIGYIGPR…DGEYGIVSKD (218 aa)). SIS domains follow at residues 280-420 (VAEL…LVGI) and 449-588 (IAVK…PDRP). Residue Lys-593 is the For Fru-6P isomerization activity of the active site.

As to quaternary structure, homodimer.

Its subcellular location is the cytoplasm. The enzyme catalyses D-fructose 6-phosphate + L-glutamine = D-glucosamine 6-phosphate + L-glutamate. Catalyzes the first step in hexosamine metabolism, converting fructose-6P into glucosamine-6P using glutamine as a nitrogen source. This is Glutamine--fructose-6-phosphate aminotransferase [isomerizing] from Pyrococcus horikoshii (strain ATCC 700860 / DSM 12428 / JCM 9974 / NBRC 100139 / OT-3).